The primary structure comprises 451 residues: Molybdate-anion transporter (451 aa).

The next 12 helical transmembrane spans lie at 1-21 (MLVTAYLFLLGLLALWGVLEF), 45-65 (YDFYRTYFPALAADWLQGPYL), 79-99 (IAIIYVCGFGASVFAGLVSVP), 130-150 (FVLMTGRVLGGFSSSLLFSCF), 180-200 (NGGIAIAAGITANVCAEWLGL), 201-221 (GPASPSVLAVPLLVLSVVLVI), 251-271 (VLLLGTIQALFESVVYIFIFL), 281-301 (APLGIAFSSFMAASAVGSSLY), 316-336 (VLCLSILMVFFSLFMLTFSTA), 346-366 (LLAFLLIELACGLYFPAMRFL), 378-398 (GVLNWFRVPLNLLAGLGLLVL), and 410-430 (MFSLCAVTMLLALLCVVSLFT).

Belongs to the major facilitator superfamily.

It localises to the cell membrane. Mediates high-affinity intracellular uptake of the rare oligo-element molybdenum. The polypeptide is Molybdate-anion transporter (mfsd5) (Xenopus laevis (African clawed frog)).